The chain runs to 725 residues: Envelope glycoprotein H (725 aa).

An N-terminal signal peptide occupies residues 1-19 (MKLSLILSIALCSTRVVYA). Residues 20-700 (AGAEAPRISR…LVNVRPSMPY (681 aa)) lie on the Virion surface side of the membrane. N38 and N50 each carry an N-linked (GlcNAc...) asparagine; by host glycan. The segment at 184 to 247 (TGYTVTVSLA…QTPDHDLLVV (64 aa)) is interaction with gL. N-linked (GlcNAc...) asparagine; by host glycosylation is found at N319, N459, N621, and N681. Residues 701-721 (SVVVALVIIAILMALGLYRLC) traverse the membrane as a helical segment. At 722–725 (RQKR) the chain is on the intravirion side.

This sequence belongs to the herpesviridae glycoprotein H family. Interacts with glycoprotein L (gL); this interaction is necessary for the correct processing and cell surface expression of gH. The heterodimer gH/gL seems to interact with gB trimers during fusion. Post-translationally, N-glycosylated, O-glycosylated, and sialylated.

It is found in the virion membrane. The protein localises to the host cell membrane. It localises to the host endosome membrane. The heterodimer glycoprotein H-glycoprotein L is required for the fusion of viral and plasma membranes leading to virus entry into the host cell. Following initial binding to host receptor, membrane fusion is mediated by the fusion machinery composed of gB and the heterodimer gH/gL. May also be involved in the fusion between the virion envelope and the outer nuclear membrane during virion morphogenesis. The sequence is that of Envelope glycoprotein H from Murid herpesvirus 1 (strain Smith) (MuHV-1).